The following is a 473-amino-acid chain: Ribosomal RNA small subunit methyltransferase F (473 aa).

S-adenosyl-L-methionine is bound by residues 123 to 129, glutamate 147, aspartate 174, and aspartate 192; that span reads AAAPGSK. Cysteine 245 functions as the Nucleophile in the catalytic mechanism.

The protein belongs to the class I-like SAM-binding methyltransferase superfamily. RsmB/NOP family.

It is found in the cytoplasm. The enzyme catalyses cytidine(1407) in 16S rRNA + S-adenosyl-L-methionine = 5-methylcytidine(1407) in 16S rRNA + S-adenosyl-L-homocysteine + H(+). In terms of biological role, specifically methylates the cytosine at position 1407 (m5C1407) of 16S rRNA. In Vibrio atlanticus (strain LGP32) (Vibrio splendidus (strain Mel32)), this protein is Ribosomal RNA small subunit methyltransferase F.